The primary structure comprises 207 residues: A-type ATP synthase subunit E (207 aa).

It belongs to the V-ATPase E subunit family. In terms of assembly, has multiple subunits with at least A(3), B(3), C, D, E, F, H, I and proteolipid K(x).

Its subcellular location is the cell membrane. Its function is as follows. Component of the A-type ATP synthase that produces ATP from ADP in the presence of a proton gradient across the membrane. This is A-type ATP synthase subunit E from Methanosphaera stadtmanae (strain ATCC 43021 / DSM 3091 / JCM 11832 / MCB-3).